We begin with the raw amino-acid sequence, 122 residues long: UPF0102 protein RHE_CH00320 (122 aa).

This sequence belongs to the UPF0102 family.

The chain is UPF0102 protein RHE_CH00320 from Rhizobium etli (strain ATCC 51251 / DSM 11541 / JCM 21823 / NBRC 15573 / CFN 42).